The primary structure comprises 521 residues: MMLDEAVGRRVCCDGERGTVRYVGPVPPTAGVWLGVEWDHPERGKHDGSHDGVRYFTCRHPTGGSFVRPQKASFGVDYVTALKQRYEVEIEEVTAEEMKISSKTVVMVGFENVKKKQSVKNLTEVGLRRCEVSAPGPENEIRNTTPFVQSLDLSGNLLSSWEVLAAITEQLDSLQELHLSHNRLSISSAPSSLSSAFSHLRVLSINSCALTWTQVLHCAPMWQQVEELYLADNNITELLRPEHVLQALTVLDLSNNQIAQETVLEISHLPRLERLNLSSTSLSEIKFSDVPAGKKTTLFPALKELLLDDNNISEWRVVNELEKLPSLVYLSCRRNPLLHKEKNLETARQIMIARLGQLELLDMRQILSDERRGAELDYCKMFGSAWLRAGGHREAEKNNPNTDFMTEHPRYLTLIQKYGAPDEGELREQKPFALKNQLLTITFLCPEDLERKPIEKKLPGSMIVQKVKGLLHRLLKLPGVELKLTYTCAKMADREIEIDNDLKPLQFYSVEDGDKILVRWS.

Residues 24-68 (GPVPPTAGVWLGVEWDHPERGKHDGSHDGVRYFTCRHPTGGSFVR) enclose the CAP-Gly domain. LRR repeat units lie at residues 147–168 (FVQS…AAIT), 173–194 (SLQE…SSLS), 199–220 (HLRV…HCAP), 224–245 (QVEE…EHVL), 247–268 (ALTV…EISH), 271–292 (RLER…DVPA), and 301–322 (ALKE…NELE). The LRRCT domain occupies 335 to 377 (NPLLHKEKNLETARQIMIARLGQLELLDMRQILSDERRGAELD).

Belongs to the TBCE family. Supercomplex made of cofactors A to E. Cofactors A and D function by capturing and stabilizing tubulin in a quasi-native conformation. Cofactor E binds to the cofactor D-tubulin complex; interaction with cofactor C then causes the release of tubulin polypeptides that are committed to the native state.

The protein resides in the cytoplasm. It is found in the cytoskeleton. Functionally, tubulin-folding protein; involved in the second step of the tubulin folding pathway. In Danio rerio (Zebrafish), this protein is Tubulin-specific chaperone E (tbce).